The following is an 82-amino-acid chain: MTKKAEELKMHEKDTGSSEVQIALLTGKIETLSAHIKQFKKDKHSSVGLLRAVNRRKKLLEYLKKNKFDSYKNVLTQLNLRK.

It belongs to the universal ribosomal protein uS15 family. Part of the 30S ribosomal subunit. Forms a bridge to the 50S subunit in the 70S ribosome, contacting the 23S rRNA.

In terms of biological role, one of the primary rRNA binding proteins, it binds directly to 16S rRNA where it helps nucleate assembly of the platform of the 30S subunit by binding and bridging several RNA helices of the 16S rRNA. Functionally, forms an intersubunit bridge (bridge B4) with the 23S rRNA of the 50S subunit in the ribosome. The polypeptide is Small ribosomal subunit protein uS15 (Pelagibacter ubique (strain HTCC1062)).